Reading from the N-terminus, the 411-residue chain is Serine/threonine-protein kinase 54 (411 aa).

A phosphoserine; by PHOT1 mark is found at Ser-43 and Ser-45. The Protein kinase domain maps to 108–385 (LIIKSVIARG…EEVVAMLEAI (278 aa)). ATP-binding positions include 114–122 (IARGTFGTV) and Lys-135. The active-site Proton acceptor is Asp-253. Position 286 is a phosphothreonine (Thr-286).

It belongs to the protein kinase superfamily. Ser/Thr protein kinase family. In terms of assembly, binds to CBC2. Associates with PHOT2, BLUS1 and PM H(+)-ATPase (e.g. AHA1). Post-translationally, autophosphorylated. Phosphorylated in guard cells by HT1 in response to low CO(2) concentrations and by PHOT1 after blue light (BL) exposure. Expressed in guard cells.

The protein localises to the cytoplasm. Its subcellular location is the cytosol. The enzyme catalyses L-seryl-[protein] + ATP = O-phospho-L-seryl-[protein] + ADP + H(+). It carries out the reaction L-threonyl-[protein] + ATP = O-phospho-L-threonyl-[protein] + ADP + H(+). Its function is as follows. Serine/threonine protein kinase that phosphorylates proteins on serine and threonine residues. Collectively with CBC2, acts as a negative regulator of stomatal opening, probably via the inhibition of plasma membrane-type ATPases (AHA1 and AHA2) activity in guard cells, but in an abscisic acid (ABA)-independent manner. However, at low concentrations of CO(2), together with CBC2, stimulates stomatal opening via the inhibition of S-type anion channels in response to blue light (BL) and red light (RL), thus being a key component to maximize photosynthesis in the light under low CO(2) conditions. Required for temperature decrease in leaves. Downstream target of HIGH LEAF TEMPERATURE1 (HT1) during low CO(2)-induced stomatal opening. Also functions in the signaling pathways of phototropins. This chain is Serine/threonine-protein kinase 54, found in Arabidopsis thaliana (Mouse-ear cress).